We begin with the raw amino-acid sequence, 34 residues long: Potassium channel toxin (34 aa).

3 disulfides stabilise this stretch: cysteine 6/cysteine 25, cysteine 11/cysteine 29, and cysteine 15/cysteine 31.

The protein belongs to the short scorpion toxin superfamily. Potassium channel inhibitor family. Alpha-KTx 21 subfamily. As to expression, expressed by the venom gland.

It is found in the secreted. Toxin that blocks voltage-gated potassium channels (Kv). This chain is Potassium channel toxin, found in Tityus metuendus (Scorpion).